The chain runs to 226 residues: Pyridoxal 5'-phosphate synthase subunit Pdx2 (226 aa).

Position 52 to 54 (52 to 54 (GES)) interacts with L-glutamine. Cys-87 (nucleophile) is an active-site residue. L-glutamine is bound by residues Arg-124 and 156–157 (IR). Active-site charge relay system residues include His-199 and Glu-201.

Belongs to the glutaminase PdxT/SNO family. As to quaternary structure, in the presence of PdxS, forms a dodecamer of heterodimers. Only shows activity in the heterodimer.

It carries out the reaction aldehydo-D-ribose 5-phosphate + D-glyceraldehyde 3-phosphate + L-glutamine = pyridoxal 5'-phosphate + L-glutamate + phosphate + 3 H2O + H(+). It catalyses the reaction L-glutamine + H2O = L-glutamate + NH4(+). The protein operates within cofactor biosynthesis; pyridoxal 5'-phosphate biosynthesis. In terms of biological role, catalyzes the hydrolysis of glutamine to glutamate and ammonia as part of the biosynthesis of pyridoxal 5'-phosphate. The resulting ammonia molecule is channeled to the active site of PdxS. The polypeptide is Pyridoxal 5'-phosphate synthase subunit Pdx2 (Plasmodium berghei).